Here is a 297-residue protein sequence, read N- to C-terminus: N-acetylneuraminate lyase (297 aa).

Serine 47 and threonine 48 together coordinate aceneuramate. Tyrosine 137 serves as the catalytic Proton donor. Catalysis depends on lysine 165, which acts as the Schiff-base intermediate with substrate. The aceneuramate site is built by threonine 167, glycine 189, aspartate 191, glutamate 192, and serine 208.

The protein belongs to the DapA family. NanA subfamily. In terms of assembly, homotetramer.

The protein resides in the cytoplasm. The catalysed reaction is aceneuramate = aldehydo-N-acetyl-D-mannosamine + pyruvate. Its pathway is amino-sugar metabolism; N-acetylneuraminate degradation; D-fructose 6-phosphate from N-acetylneuraminate: step 1/5. Its function is as follows. Catalyzes the reversible aldol cleavage of N-acetylneuraminic acid (sialic acid; Neu5Ac) to form pyruvate and N-acetylmannosamine (ManNAc) via a Schiff base intermediate. The sequence is that of N-acetylneuraminate lyase from Citrobacter koseri (strain ATCC BAA-895 / CDC 4225-83 / SGSC4696).